A 212-amino-acid polypeptide reads, in one-letter code: Thiamine-phosphate synthase (212 aa).

Residues 40 to 44 (QFREK) and Asn-75 contribute to the 4-amino-2-methyl-5-(diphosphooxymethyl)pyrimidine site. Residues Asp-76 and Asp-95 each contribute to the Mg(2+) site. Ser-113 provides a ligand contact to 4-amino-2-methyl-5-(diphosphooxymethyl)pyrimidine. Residue 139-141 (TPS) participates in 2-[(2R,5Z)-2-carboxy-4-methylthiazol-5(2H)-ylidene]ethyl phosphate binding. Lys-142 lines the 4-amino-2-methyl-5-(diphosphooxymethyl)pyrimidine pocket. 2-[(2R,5Z)-2-carboxy-4-methylthiazol-5(2H)-ylidene]ethyl phosphate is bound by residues Gly-171 and 191–192 (IS).

It belongs to the thiamine-phosphate synthase family. The cofactor is Mg(2+).

It catalyses the reaction 2-[(2R,5Z)-2-carboxy-4-methylthiazol-5(2H)-ylidene]ethyl phosphate + 4-amino-2-methyl-5-(diphosphooxymethyl)pyrimidine + 2 H(+) = thiamine phosphate + CO2 + diphosphate. The enzyme catalyses 2-(2-carboxy-4-methylthiazol-5-yl)ethyl phosphate + 4-amino-2-methyl-5-(diphosphooxymethyl)pyrimidine + 2 H(+) = thiamine phosphate + CO2 + diphosphate. The catalysed reaction is 4-methyl-5-(2-phosphooxyethyl)-thiazole + 4-amino-2-methyl-5-(diphosphooxymethyl)pyrimidine + H(+) = thiamine phosphate + diphosphate. Its pathway is cofactor biosynthesis; thiamine diphosphate biosynthesis; thiamine phosphate from 4-amino-2-methyl-5-diphosphomethylpyrimidine and 4-methyl-5-(2-phosphoethyl)-thiazole: step 1/1. Its function is as follows. Condenses 4-methyl-5-(beta-hydroxyethyl)thiazole monophosphate (THZ-P) and 2-methyl-4-amino-5-hydroxymethyl pyrimidine pyrophosphate (HMP-PP) to form thiamine monophosphate (TMP). This Staphylococcus carnosus (strain TM300) protein is Thiamine-phosphate synthase.